The primary structure comprises 288 residues: Acetyl-coenzyme A carboxylase carboxyl transferase subunit beta (288 aa).

The CoA carboxyltransferase N-terminal domain maps to 32–288 (MWAKCPSCKR…LRLHSLEGWR (257 aa)). Positions 36, 39, 54, and 57 each coordinate Zn(2+). The C4-type zinc-finger motif lies at 36 to 57 (CPSCKRTLYTKEMGAEKICPHC).

The protein belongs to the AccD/PCCB family. As to quaternary structure, acetyl-CoA carboxylase is a heterohexamer composed of biotin carboxyl carrier protein (AccB), biotin carboxylase (AccC) and two subunits each of ACCase subunit alpha (AccA) and ACCase subunit beta (AccD). Requires Zn(2+) as cofactor.

The protein localises to the cytoplasm. The catalysed reaction is N(6)-carboxybiotinyl-L-lysyl-[protein] + acetyl-CoA = N(6)-biotinyl-L-lysyl-[protein] + malonyl-CoA. It participates in lipid metabolism; malonyl-CoA biosynthesis; malonyl-CoA from acetyl-CoA: step 1/1. Component of the acetyl coenzyme A carboxylase (ACC) complex. Biotin carboxylase (BC) catalyzes the carboxylation of biotin on its carrier protein (BCCP) and then the CO(2) group is transferred by the transcarboxylase to acetyl-CoA to form malonyl-CoA. The protein is Acetyl-coenzyme A carboxylase carboxyl transferase subunit beta of Enterococcus faecalis (strain ATCC 700802 / V583).